Here is a 335-residue protein sequence, read N- to C-terminus: Probable cyclin-H (335 aa).

Belongs to the cyclin family. Cyclin C subfamily.

It is found in the nucleus. Its function is as follows. Regulates CDK7, the catalytic subunit of the CDK-activating kinase (CAK) enzymatic complex. In Echinococcus multilocularis (Fox tapeworm), this protein is Probable cyclin-H (CYCH).